The primary structure comprises 956 residues: GAS2-like protein 2B (956 aa).

In terms of domain architecture, Calponin-homology (CH) spans 23–150 (YAMKEDLAEW…CLLELARRAS (128 aa)). The GAR domain maps to 191–263 (CDFKNLDQMV…HYLDKHDPCH (73 aa)). Composition is skewed to polar residues over residues 332-353 (SSSY…QTPP) and 381-390 (DPQQLGNPQS). 4 disordered regions span residues 332 to 361 (SSSY…SMSI), 378 to 406 (DTQD…ASQL), 853 to 885 (RPKI…SRNN), and 914 to 956 (VNSE…ESWV). Residues 859–868 (RRDNRPEKKP) are compositionally biased toward basic and acidic residues.

It belongs to the GAS2 family.

The protein localises to the cytoplasm. The protein resides in the cytoskeleton. Its subcellular location is the cilium basal body. Functionally, together with gas2l2.L, regulates ciliary orientation and performance. The chain is GAS2-like protein 2B from Xenopus laevis (African clawed frog).